A 934-amino-acid chain; its full sequence is uncharacterized protein (934 aa).

Residues 1 to 24 (MKLKKRYLLLGSTLTVSAALILSA) form the signal peptide. Cys-25 is lipidated: N-palmitoyl cysteine. Cys-25 carries S-diacylglycerol cysteine lipidation. The disordered stretch occupies residues 111–131 (SGLKGRAQKNGSTDSSDGSSK). Over residues 119–131 (KNGSTDSSDGSSK) the composition is skewed to polar residues.

It localises to the cell membrane. This is an uncharacterized protein from Mycoplasma genitalium (strain ATCC 33530 / DSM 19775 / NCTC 10195 / G37) (Mycoplasmoides genitalium).